Consider the following 344-residue polypeptide: Dihydroorotate dehydrogenase (quinone) (344 aa).

Residues 65–69 (AGLDK) and T89 each bind FMN. K69 contributes to the substrate binding site. 114–118 (NRMGF) is a substrate binding site. FMN contacts are provided by N145 and N178. Substrate is bound at residue N178. S181 serves as the catalytic Nucleophile. N183 lines the substrate pocket. The FMN site is built by K223 and T251. 252–253 (NT) contributes to the substrate binding site. FMN-binding positions include G274, G303, and 324-325 (YS).

Belongs to the dihydroorotate dehydrogenase family. Type 2 subfamily. In terms of assembly, monomer. FMN is required as a cofactor.

The protein localises to the cell membrane. The catalysed reaction is (S)-dihydroorotate + a quinone = orotate + a quinol. The protein operates within pyrimidine metabolism; UMP biosynthesis via de novo pathway; orotate from (S)-dihydroorotate (quinone route): step 1/1. Catalyzes the conversion of dihydroorotate to orotate with quinone as electron acceptor. This is Dihydroorotate dehydrogenase (quinone) from Cupriavidus pinatubonensis (strain JMP 134 / LMG 1197) (Cupriavidus necator (strain JMP 134)).